The primary structure comprises 209 residues: Imidazole glycerol phosphate synthase subunit HisH (209 aa).

A Glutamine amidotransferase type-1 domain is found at 1–205 (MIAIIDYGMG…QGVVEAWKSS (205 aa)). Cysteine 79 acts as the Nucleophile in catalysis. Residues histidine 180 and glutamate 182 contribute to the active site.

In terms of assembly, heterodimer of HisH and HisF.

The protein resides in the cytoplasm. It carries out the reaction 5-[(5-phospho-1-deoxy-D-ribulos-1-ylimino)methylamino]-1-(5-phospho-beta-D-ribosyl)imidazole-4-carboxamide + L-glutamine = D-erythro-1-(imidazol-4-yl)glycerol 3-phosphate + 5-amino-1-(5-phospho-beta-D-ribosyl)imidazole-4-carboxamide + L-glutamate + H(+). The catalysed reaction is L-glutamine + H2O = L-glutamate + NH4(+). Its pathway is amino-acid biosynthesis; L-histidine biosynthesis; L-histidine from 5-phospho-alpha-D-ribose 1-diphosphate: step 5/9. In terms of biological role, IGPS catalyzes the conversion of PRFAR and glutamine to IGP, AICAR and glutamate. The HisH subunit catalyzes the hydrolysis of glutamine to glutamate and ammonia as part of the synthesis of IGP and AICAR. The resulting ammonia molecule is channeled to the active site of HisF. The polypeptide is Imidazole glycerol phosphate synthase subunit HisH (Bacillus cereus (strain G9842)).